Consider the following 692-residue polypeptide: Ribonuclease R (692 aa).

In terms of domain architecture, RNB spans 204–525 (RKDLRDLLCF…IVHRLLFHPL (322 aa)). In terms of domain architecture, S1 motif spans 563–648 (KKFLDEQPAT…LTQAIEWTLI (86 aa)). A disordered region spans residues 651-692 (KERSSSKKKKAKAKSNATQVKKKSSSKKKKAVSKAKKNRGGK). Residues 670 to 692 (VKKKSSSKKKKAVSKAKKNRGGK) show a composition bias toward basic residues.

This sequence belongs to the RNR ribonuclease family. RNase R subfamily.

It is found in the cytoplasm. It carries out the reaction Exonucleolytic cleavage in the 3'- to 5'-direction to yield nucleoside 5'-phosphates.. Its function is as follows. 3'-5' exoribonuclease that releases 5'-nucleoside monophosphates and is involved in maturation of structured RNAs. This Chlamydia muridarum (strain MoPn / Nigg) protein is Ribonuclease R.